The sequence spans 266 residues: Na(+)-translocating NADH-quinone reductase subunit C (266 aa).

Residues 16 to 36 (LLVVVILCLVCSVVVAGAAVG) traverse the membrane as a helical segment. Thr-232 is modified (FMN phosphoryl threonine).

It belongs to the NqrC family. As to quaternary structure, composed of six subunits; NqrA, NqrB, NqrC, NqrD, NqrE and NqrF. FMN serves as cofactor.

The protein localises to the cell inner membrane. The enzyme catalyses a ubiquinone + n Na(+)(in) + NADH + H(+) = a ubiquinol + n Na(+)(out) + NAD(+). NQR complex catalyzes the reduction of ubiquinone-1 to ubiquinol by two successive reactions, coupled with the transport of Na(+) ions from the cytoplasm to the periplasm. NqrA to NqrE are probably involved in the second step, the conversion of ubisemiquinone to ubiquinol. The polypeptide is Na(+)-translocating NADH-quinone reductase subunit C (Yersinia pestis).